The following is a 742-amino-acid chain: Ferric enterobactin receptor PirA (742 aa).

An N-terminal signal peptide occupies residues 1-28; it reads MYPQFRRGHLAAAVLFASSSLLGGQALA. The 128-residue stretch at 57–184 folds into the TBDR plug domain; that stretch reads QELKQAPGVS…AGGVVNIITK (128 aa). 2 disordered regions span residues 91–112 and 409–435; these read GVNL…IDIR and SSLK…PKSK. Polar residues predominate over residues 94 to 108; that stretch reads LTGNSSSGQRGNNRQ. The TBDR beta-barrel domain occupies 189–742; the sequence is RLRGSMTVFT…AYYVSMTTSF (554 aa). Cys516 and Cys525 form a disulfide bridge. The TonB C-terminal box signature appears at 725–742; the sequence is ATYNEPGRAYYVSMTTSF.

Belongs to the TonB-dependent receptor family.

The protein localises to the cell outer membrane. Functionally, specific receptor for the siderophore ferric enterobactin. Probably involved in the transport of siderophores, including host catecholamines such as L-DOPA. In Pseudomonas aeruginosa (strain ATCC 15692 / DSM 22644 / CIP 104116 / JCM 14847 / LMG 12228 / 1C / PRS 101 / PAO1), this protein is Ferric enterobactin receptor PirA.